A 160-amino-acid polypeptide reads, in one-letter code: Crossover junction endodeoxyribonuclease RuvC (160 aa).

Active-site residues include Asp-7, Glu-73, and Asp-145. Positions 7, 73, and 145 each coordinate Mg(2+).

This sequence belongs to the RuvC family. Homodimer which binds Holliday junction (HJ) DNA. The HJ becomes 2-fold symmetrical on binding to RuvC with unstacked arms; it has a different conformation from HJ DNA in complex with RuvA. In the full resolvosome a probable DNA-RuvA(4)-RuvB(12)-RuvC(2) complex forms which resolves the HJ. The cofactor is Mg(2+).

The protein localises to the cytoplasm. It carries out the reaction Endonucleolytic cleavage at a junction such as a reciprocal single-stranded crossover between two homologous DNA duplexes (Holliday junction).. In terms of biological role, the RuvA-RuvB-RuvC complex processes Holliday junction (HJ) DNA during genetic recombination and DNA repair. Endonuclease that resolves HJ intermediates. Cleaves cruciform DNA by making single-stranded nicks across the HJ at symmetrical positions within the homologous arms, yielding a 5'-phosphate and a 3'-hydroxyl group; requires a central core of homology in the junction. The consensus cleavage sequence is 5'-(A/T)TT(C/G)-3'. Cleavage occurs on the 3'-side of the TT dinucleotide at the point of strand exchange. HJ branch migration catalyzed by RuvA-RuvB allows RuvC to scan DNA until it finds its consensus sequence, where it cleaves and resolves the cruciform DNA. In Synechococcus sp. (strain CC9311), this protein is Crossover junction endodeoxyribonuclease RuvC.